Here is a 573-residue protein sequence, read N- to C-terminus: Sulfate adenylyltransferase (573 aa).

The tract at residues 1 to 169 is N-terminal; that stretch reads MANPPHGGIL…VEAVNKLNHY (169 aa). The catalytic stretch occupies residues 170-394; the sequence is DYVGLRFTPA…LRESNPPRSK (225 aa). Gln197 contacts sulfate. Residues 197–200 and 291–294 contribute to the ATP site; these read QTRN and GRDH. Active-site residues include Thr198, Arg199, and Asn200. A sulfate-binding site is contributed by Arg199. Sulfate is bound at residue Ala295. ATP is bound at residue Leu333. Residues 395–573 are allosteric regulation domain; adenylyl-sulfate kinase-like; that stretch reads QGFTVFLTGY…LESQGFLEKA (179 aa). 3'-phosphoadenylyl sulfate contacts are provided by residues 434–437, Arg451, 477–478, and Arg515; these read DTVR and IA.

This sequence in the N-terminal section; belongs to the sulfate adenylyltransferase family. The protein in the C-terminal section; belongs to the APS kinase family. Homohexamer. Dimer of trimers.

It is found in the cytoplasm. It carries out the reaction sulfate + ATP + H(+) = adenosine 5'-phosphosulfate + diphosphate. The protein operates within sulfur metabolism; hydrogen sulfide biosynthesis; sulfite from sulfate: step 1/3. Its activity is regulated as follows. Allosterically inhibited by 3'-phosphoadenosine 5'-phosphosulfate (PAPS). Its function is as follows. Catalyzes the first intracellular reaction of sulfate assimilation, forming adenosine-5'-phosphosulfate (APS) from inorganic sulfate and ATP. Plays an important role in sulfate activation as a component of the biosynthesis pathway of sulfur-containing amino acids. This Coccidioides immitis (strain RS) (Valley fever fungus) protein is Sulfate adenylyltransferase.